A 355-amino-acid chain; its full sequence is MSGQGKRLMVMAGGTGGHVFPGLAVAHYLMAQGWQVRWLGTADRMEADLVPKHGIEIDFIRISGLRGKGIKALIAAPLRIFNAWRQARAIMKAYKPDVVLGMGGYVSGPGGLAAWSLGIPVVLHEQNGIAGLTNKWLAKIATKVMQAFPGAFPNAEVVGNPVRTDVLALPLPQQRLAGREGPVRVLVVGGSQGARILNQTMPQVAAKLGDSVTIWHQSGKGSQQSVEQAYAEAGQPQHKVTEFIDDMAAAYAWADVVVCRSGALTVSEIAAAGLPALFVPFQHKDRQQYWNALPLEKAGAAKIIEQPQLSVDAVANTLAGWSRETLLTMAERARAASIPDATERVANEVSRAARA.

UDP-N-acetyl-alpha-D-glucosamine-binding positions include T15–G17, N127, R163, S191, I244, A263–E268, and Q288.

It belongs to the glycosyltransferase 28 family. MurG subfamily.

Its subcellular location is the cell inner membrane. It carries out the reaction di-trans,octa-cis-undecaprenyl diphospho-N-acetyl-alpha-D-muramoyl-L-alanyl-D-glutamyl-meso-2,6-diaminopimeloyl-D-alanyl-D-alanine + UDP-N-acetyl-alpha-D-glucosamine = di-trans,octa-cis-undecaprenyl diphospho-[N-acetyl-alpha-D-glucosaminyl-(1-&gt;4)]-N-acetyl-alpha-D-muramoyl-L-alanyl-D-glutamyl-meso-2,6-diaminopimeloyl-D-alanyl-D-alanine + UDP + H(+). Its pathway is cell wall biogenesis; peptidoglycan biosynthesis. Cell wall formation. Catalyzes the transfer of a GlcNAc subunit on undecaprenyl-pyrophosphoryl-MurNAc-pentapeptide (lipid intermediate I) to form undecaprenyl-pyrophosphoryl-MurNAc-(pentapeptide)GlcNAc (lipid intermediate II). The polypeptide is UDP-N-acetylglucosamine--N-acetylmuramyl-(pentapeptide) pyrophosphoryl-undecaprenol N-acetylglucosamine transferase (Shigella flexneri serotype 5b (strain 8401)).